The sequence spans 70 residues: uncharacterized protein (70 aa).

This is an uncharacterized protein from Dictyostelium discoideum (Social amoeba).